We begin with the raw amino-acid sequence, 383 residues long: L-lactate dehydrogenase (383 aa).

The FMN hydroxy acid dehydrogenase domain occupies 1-380 (MIISSTFDYR…THESLASTDA (380 aa)). A substrate-binding site is contributed by Y24. FMN-binding residues include S106 and Q127. Residue Y129 participates in substrate binding. T155 lines the FMN pocket. Substrate is bound at residue R164. K251 is a binding site for FMN. H275 functions as the Proton acceptor in the catalytic mechanism. Position 278 (R278) interacts with substrate. Position 306-330 (306-330 (DSGVRSGLDVVRMIAQGADAVMIGR)) interacts with FMN.

The protein belongs to the FMN-dependent alpha-hydroxy acid dehydrogenase family. The cofactor is FMN.

The protein resides in the cell inner membrane. The catalysed reaction is (S)-lactate + A = pyruvate + AH2. In terms of biological role, catalyzes the conversion of L-lactate to pyruvate. Is coupled to the respiratory chain. This Bartonella quintana (strain Toulouse) (Rochalimaea quintana) protein is L-lactate dehydrogenase.